The following is a 348-amino-acid chain: Fructose-1,6-bisphosphatase class 1 (348 aa).

Residues Glu107, Asp129, Ile131, and Asp132 each coordinate Mg(2+). Residues 132-135 (DGSS), Asn224, Tyr252, and Lys282 each bind substrate. Position 288 (Glu288) interacts with Mg(2+).

The protein belongs to the FBPase class 1 family. In terms of assembly, homotetramer. It depends on Mg(2+) as a cofactor.

Its subcellular location is the cytoplasm. It carries out the reaction beta-D-fructose 1,6-bisphosphate + H2O = beta-D-fructose 6-phosphate + phosphate. The protein operates within carbohydrate biosynthesis; Calvin cycle. The polypeptide is Fructose-1,6-bisphosphatase class 1 (Microcystis aeruginosa (strain NIES-843 / IAM M-2473)).